The chain runs to 943 residues: Coiled-coil and C2 domain-containing protein 1A (943 aa).

Position 91 is a phosphothreonine (Thr-91). 2 disordered regions span residues 186-250 (NEAD…CSPL) and 300-337 (DLSRLPPPPDQLSPEPPLPAAQPLTSASTLTRPEVPQP). 2 stretches are compositionally biased toward low complexity: residues 195–206 (ASGKGAAAGHSH) and 229–238 (APSTTTPTSA). Ser-248 carries the phosphoserine modification. Over residues 304-319 (LPPPPDQLSPEPPLPA) the composition is skewed to pro residues. Positions 339–385 (RNLLEALEQRMERYHVAAAQAKAKGDQRKARMHERIVKQYQDAIRAH) form a coiled coil. A disordered region spans residues 430-483 (NHDEGSDDEEEETPKKQNTPAASTTQLKSSPSKAPPSGPAPAGKAAPKGTSNRA). A Phosphoserine modification is found at Ser-435. A compositionally biased stretch (polar residues) spans 445 to 456 (KQNTPAASTTQL). Over residues 469–478 (APAGKAAPKG) the composition is skewed to low complexity. Residues 477–510 (KGTSNRAQQQLAFLEGRKKQLLQAALRAKQKNDV) are a coiled coil. The C2 domain occupies 630–764 (RFEQRTFSVI…ETACEVHEIL (135 aa)).

This sequence belongs to the CC2D1 family. In terms of tissue distribution, highly expressed in brain, expression is enriched in the gray matter and strongest in the olfactory bulb.

Its subcellular location is the cytoplasm. It localises to the nucleus. The protein localises to the cytoskeleton. It is found in the microtubule organizing center. The protein resides in the centrosome. Functionally, transcription factor that binds specifically to the DRE (dual repressor element) and represses HTR1A gene transcription in neuronal cells. The combination of calcium and ATP specifically inactivates the binding with FRE. May play a role in the altered regulation of HTR1A associated with anxiety and major depression. Mediates HDAC-independent repression of HTR1A promoter in neuronal cell. Performs essential function in controlling functional maturation of synapses. In Mus musculus (Mouse), this protein is Coiled-coil and C2 domain-containing protein 1A (Cc2d1a).